A 368-amino-acid polypeptide reads, in one-letter code: DNA replication and repair protein RecF (368 aa).

ATP is bound at residue 30 to 37; it reads GNNAQGKT.

It belongs to the RecF family.

The protein resides in the cytoplasm. In terms of biological role, the RecF protein is involved in DNA metabolism; it is required for DNA replication and normal SOS inducibility. RecF binds preferentially to single-stranded, linear DNA. It also seems to bind ATP. The chain is DNA replication and repair protein RecF from Streptococcus pyogenes serotype M5 (strain Manfredo).